Reading from the N-terminus, the 262-residue chain is Acyl-[acyl-carrier-protein]--UDP-N-acetylglucosamine O-acyltransferase (262 aa).

The protein belongs to the transferase hexapeptide repeat family. LpxA subfamily. In terms of assembly, homotrimer.

It is found in the cytoplasm. It catalyses the reaction a (3R)-hydroxyacyl-[ACP] + UDP-N-acetyl-alpha-D-glucosamine = a UDP-3-O-[(3R)-3-hydroxyacyl]-N-acetyl-alpha-D-glucosamine + holo-[ACP]. The protein operates within glycolipid biosynthesis; lipid IV(A) biosynthesis; lipid IV(A) from (3R)-3-hydroxytetradecanoyl-[acyl-carrier-protein] and UDP-N-acetyl-alpha-D-glucosamine: step 1/6. Its function is as follows. Involved in the biosynthesis of lipid A, a phosphorylated glycolipid that anchors the lipopolysaccharide to the outer membrane of the cell. This is Acyl-[acyl-carrier-protein]--UDP-N-acetylglucosamine O-acyltransferase from Salmonella heidelberg (strain SL476).